A 571-amino-acid polypeptide reads, in one-letter code: Methionine--tRNA ligase (571 aa).

Positions 10–20 (PYVNAVPHLGN) match the 'HIGH' region motif. Zn(2+) contacts are provided by cysteine 143, cysteine 146, cysteine 156, and cysteine 159. A 'KMSKS' region motif is present at residues 333–337 (KFSKS). An ATP-binding site is contributed by lysine 336.

The protein belongs to the class-I aminoacyl-tRNA synthetase family. MetG type 1 subfamily. It depends on Zn(2+) as a cofactor.

It localises to the cytoplasm. It carries out the reaction tRNA(Met) + L-methionine + ATP = L-methionyl-tRNA(Met) + AMP + diphosphate. Its function is as follows. Is required not only for elongation of protein synthesis but also for the initiation of all mRNA translation through initiator tRNA(fMet) aminoacylation. The protein is Methionine--tRNA ligase of Sulfurisphaera tokodaii (strain DSM 16993 / JCM 10545 / NBRC 100140 / 7) (Sulfolobus tokodaii).